We begin with the raw amino-acid sequence, 337 residues long: Dihydroorotate dehydrogenase (quinone) (337 aa).

FMN-binding positions include 61–65 and threonine 85; that span reads AGLDK. Lysine 65 is a binding site for substrate. Residue 110–114 participates in substrate binding; the sequence is NRMGF. FMN is bound by residues asparagine 138 and asparagine 171. Asparagine 171 lines the substrate pocket. The Nucleophile role is filled by serine 174. Asparagine 176 serves as a coordination point for substrate. FMN contacts are provided by lysine 216 and threonine 244. Residue 245 to 246 participates in substrate binding; that stretch reads NT. Residues glycine 267, glycine 296, and 317 to 318 each bind FMN; that span reads YS.

It belongs to the dihydroorotate dehydrogenase family. Type 2 subfamily. Monomer. The cofactor is FMN.

The protein localises to the cell membrane. The enzyme catalyses (S)-dihydroorotate + a quinone = orotate + a quinol. It functions in the pathway pyrimidine metabolism; UMP biosynthesis via de novo pathway; orotate from (S)-dihydroorotate (quinone route): step 1/1. Its function is as follows. Catalyzes the conversion of dihydroorotate to orotate with quinone as electron acceptor. This is Dihydroorotate dehydrogenase (quinone) from Thiobacillus denitrificans (strain ATCC 25259 / T1).